Consider the following 142-residue polypeptide: Baculoviral IAP repeat-containing protein 5 (142 aa).

The stretch at 18 to 88 is one BIR repeat; that stretch reads RVSTFKNWPF…KHSSGCAFLS (71 aa). Phosphoserine; by AURKC is present on serine 20. N6-acetyllysine is present on lysine 23. Threonine 34 carries the post-translational modification Phosphothreonine; by CDK1 and CDK15. A Phosphothreonine; by CK2; in vitro modification is found at threonine 48. Zn(2+) contacts are provided by cysteine 57, cysteine 60, histidine 77, and cysteine 84. Lysine 90, lysine 110, lysine 112, and lysine 115 each carry N6-acetyllysine. The residue at position 117 (threonine 117) is a Phosphothreonine; by AURKB.

It belongs to the IAP family. Monomer or homodimer. Exists as a homodimer in the apo state and as a monomer in the CPC-bound state. The monomer protects cells against apoptosis more efficiently than the dimer. Only the dimeric form is capable of enhancing tubulin stability in cells. When phosphorylated, interacts with LAMTOR5/HBXIP; the resulting complex binds pro-CASP9, as well as active CASP9, but much less efficiently. Component of the chromosomal passenger complex (CPC) composed of at least BIRC5/survivin, CDCA8/borealin, INCENP, AURKB or AURKC; in the complex forms a triple-helix bundle-based subcomplex with INCENP and CDCA8. Interacts with JTB. Interacts (via BIR domain) with histone H3 phosphorylated at 'Thr-3' (H3pT3). Interacts with EVI5. Interacts with GTP-bound RAN in both the S and M phases of the cell cycle. Interacts with USP9X. Interacts with tubulin. Interacts with BIRC2/c-IAP1. The monomeric form interacts with XIAP/BIRC4. Both the dimeric and monomeric form can interact with DIABLO/SMAC. Interacts with BIRC6/bruce. Interacts with FBXL7; this interaction facilitates the polyubiquitination and subsequent proteasomal degradation of BIRC5 by the SCF(FBXL7) E3 ubiquitin-protein ligase complex. Post-translationally, ubiquitinated by the Cul9-RING ubiquitin-protein ligase complex, leading to its degradation. Ubiquitination is required for centrosomal targeting. Deubiquitinated by USP35 or USP38; leading to stabilization. In terms of processing, in vitro phosphorylation at Thr-117 by AURKB prevents interaction with INCENP and localization to mitotic chromosomes. Phosphorylation at Thr-48 by CK2 is critical for its mitotic and anti-apoptotic activities. Phosphorylation at Thr-34 by CDK15 is critical for its anti-apoptotic activity. Phosphorylation at Ser-20 by AURKC is critical for regulation of proper chromosome alignment and segregation, and possibly cytokinesis. As to expression, expressed in spleen, lung, brain, heart, kidney and intestine (at protein level). Expressed in cochlea including the organ of Corti, the lateral wall, the interdental cells of the Limbus as well as in cells of the cochlear nerve and the spiral ganglions (at protein level). Also expressed in Schwann cells (at protein level). Not expressed in cells of the inner and outer sulcus or the Reissner's membrane (at protein level).

Its subcellular location is the cytoplasm. It is found in the nucleus. The protein resides in the chromosome. The protein localises to the centromere. It localises to the cytoskeleton. Its subcellular location is the spindle. It is found in the kinetochore. The protein resides in the midbody. Its function is as follows. Multitasking protein that has dual roles in promoting cell proliferation and preventing apoptosis. Component of a chromosome passage protein complex (CPC) which is essential for chromosome alignment and segregation during mitosis and cytokinesis. Acts as an important regulator of the localization of this complex; directs CPC movement to different locations from the inner centromere during prometaphase to midbody during cytokinesis and participates in the organization of the center spindle by associating with polymerized microtubules. Involved in the recruitment of CPC to centromeres during early mitosis via association with histone H3 phosphorylated at 'Thr-3' (H3pT3) during mitosis. The complex with RAN plays a role in mitotic spindle formation by serving as a physical scaffold to help deliver the RAN effector molecule TPX2 to microtubules. May counteract a default induction of apoptosis in G2/M phase. The acetylated form represses STAT3 transactivation of target gene promoters. May play a role in neoplasia. Inhibitor of CASP3 and CASP7. Essential for the maintenance of mitochondrial integrity and function. The sequence is that of Baculoviral IAP repeat-containing protein 5 from Cavia porcellus (Guinea pig).